Here is a 371-residue protein sequence, read N- to C-terminus: tRNA-specific 2-thiouridylase MnmA (371 aa).

Residues 16–23 and methionine 42 contribute to the ATP site; that span reads GMSGGVDS. The segment at 102–104 is interaction with target base in tRNA; that stretch reads NPD. Cysteine 107 (nucleophile) is an active-site residue. Cysteine 107 and cysteine 204 are oxidised to a cystine. Glycine 132 provides a ligand contact to ATP. The segment at 154–156 is interaction with tRNA; it reads KDQ. Cysteine 204 acts as the Cysteine persulfide intermediate in catalysis. An interaction with tRNA region spans residues 316 to 317; the sequence is RY.

Belongs to the MnmA/TRMU family.

It is found in the cytoplasm. The catalysed reaction is S-sulfanyl-L-cysteinyl-[protein] + uridine(34) in tRNA + AH2 + ATP = 2-thiouridine(34) in tRNA + L-cysteinyl-[protein] + A + AMP + diphosphate + H(+). In terms of biological role, catalyzes the 2-thiolation of uridine at the wobble position (U34) of tRNA, leading to the formation of s(2)U34. The chain is tRNA-specific 2-thiouridylase MnmA from Shewanella pealeana (strain ATCC 700345 / ANG-SQ1).